The primary structure comprises 370 residues: Platelet-derived growth factor D (370 aa).

Positions 1–23 (MQRLVLVSILLCANFSCYPDTFA) are cleaved as a signal peptide. A CUB domain is found at 52 to 170 (REENIQVTSN…PGFKIYYSFV (119 aa)). C109 and C131 are joined by a disulfide. A glycan (N-linked (GlcNAc...) asparagine) is linked at N276. 2 disulfides stabilise this stretch: C302–C360 and C306–C362.

The protein belongs to the PDGF/VEGF growth factor family. In terms of assembly, homodimer; disulfide-linked. Interacts with PDGFRB homodimers, and with heterodimers formed by PDGFRA and PDGFRB. Activated by proteolytic cleavage. Proteolytic removal of the N-terminal CUB domain releasing the core domain is necessary for unmasking the receptor-binding epitopes of the core domain. Cleavage after Arg-247 or Arg-249 by urokinase plasminogen activator gives rise to the active form. As to expression, expressed at high levels in developing heart, lung, kidney and some muscle derivatives. Moderately expressed in liver, brain and testis. In the kidney, localized to glomerular mesangial cells and vascular smooth muscle cells. Up-regulated in areas of renal fibrosis. In mice with unilateral ureteral obstruction, expressed in interstitial cells at day 4, with an increased to maximal expression at day 14.

It is found in the secreted. In terms of biological role, growth factor that plays an essential role in the regulation of embryonic development, cell proliferation, cell migration, survival and chemotaxis. Potent mitogen for cells of mesenchymal origin. Plays an important role in wound healing. Has oncogenic potential and can induce tumor formation. Induces macrophage recruitment, increased interstitial pressure, and blood vessel maturation during angiogenesis. Can initiate events that lead to a mesangial proliferative glomerulonephritis, including influx of monocytes and macrophages and production of extracellular matrix. This chain is Platelet-derived growth factor D (Pdgfd), found in Mus musculus (Mouse).